The following is a 187-amino-acid chain: Interferon beta (187 aa).

Positions 1–21 (MTNKCLLQIALLLCFSTTALS) are cleaved as a signal peptide. At tyrosine 24 the chain carries Phosphotyrosine. Cysteine 52 and cysteine 162 form a disulfide bridge. An N-linked (GlcNAc...) asparagine glycan is attached at asparagine 101.

This sequence belongs to the alpha/beta interferon family. As to quaternary structure, monomer.

The protein resides in the secreted. Its function is as follows. Type I interferon cytokine that plays a key role in the innate immune response to infection, developing tumors and other inflammatory stimuli. Signals via binding to high-affinity (IFNAR2) and low-affinity (IFNAR1) heterodimeric receptor, activating the canonical Jak-STAT signaling pathway resulting in transcriptional activation or repression of interferon-regulated genes that encode the effectors of the interferon response, such as antiviral proteins, regulators of cell proliferation and differentiation, and immunoregulatory proteins. Signals mostly via binding to a IFNAR1-IFNAR2 heterodimeric receptor, but can also function with IFNAR1 alone and independently of Jak-STAT pathways. Elicits a wide variety of responses, including antiviral and antibacterial activities, and can regulate the development of B-cells, myelopoiesis and lipopolysaccharide (LPS)-inducible production of tumor necrosis factor. Plays a role in neuronal homeostasis by regulating dopamine turnover and protecting dopaminergic neurons: acts by promoting neuronal autophagy and alpha-synuclein clearance, thereby preventing dopaminergic neuron loss. IFNB1 is more potent than interferon-alpha (IFN-alpha) in inducing the apoptotic and antiproliferative pathways required for control of tumor cell growth. In Macaca fascicularis (Crab-eating macaque), this protein is Interferon beta (IFNB1).